Consider the following 484-residue polypeptide: 6-phosphogluconate dehydrogenase, decarboxylating (484 aa).

NADP(+)-binding positions include G11–G16, N34–T36, V76–A78, and N104. Substrate is bound by residues N104 and S130–G132. The active-site Proton acceptor is K185. H188–N189 is a binding site for substrate. E192 functions as the Proton donor in the catalytic mechanism. Residues Y193, K262, R289, R447, and H453 each coordinate substrate.

Belongs to the 6-phosphogluconate dehydrogenase family. Homodimer.

The enzyme catalyses 6-phospho-D-gluconate + NADP(+) = D-ribulose 5-phosphate + CO2 + NADPH. The protein operates within carbohydrate degradation; pentose phosphate pathway; D-ribulose 5-phosphate from D-glucose 6-phosphate (oxidative stage): step 3/3. Its function is as follows. Catalyzes the oxidative decarboxylation of 6-phosphogluconate to ribulose 5-phosphate and CO(2), with concomitant reduction of NADP to NADPH. The protein is 6-phosphogluconate dehydrogenase, decarboxylating of Aggregatibacter actinomycetemcomitans (Actinobacillus actinomycetemcomitans).